A 536-amino-acid chain; its full sequence is MEFSSPSREECPKPSGRVSIMAGSLTGLLLLQAVSWASGARPCIPKSFGYSSVVCVCNATYCDSFDPPTFPALGTFSRYESTRSGRRMELSMGTIQANHTGTGLLLTLQPEQKFQKVKGFGGAMTDAAALNILALSPPAQNLLLKSYFSEEGIGYNIIRVPMASCDFSIRTYTYADTPDDFQLHNFSLPEEDTKLKIPLIHRALQLAQRPVSLLASPWTSPTWLKTNGAVNGKGSLKGQPGDIYHQTWARYFVKFLDAYAEHKLQFWAVTAENEPSAGLLSGYPFQCLGFTPEHQRDFIARDLGPTLANSTHHNVRLLMLDDQRLLLPHWAKVVLTDPEAAKYVHGIAVHWYLDFLAPAKATLGETHRLFPNTMLFASEACVGSKFWEQSVRLGSWDRGMQYSHSIITNLLYHVVGWTDWNLALNPEGGPNWVRNFVDSPIIVDITKDTFYKQPMFYHLGHFSKFIPEGSQRVGLVASQKNDLDAVALMHPDGSAVVVVLNRSSKDVPLTIKDPAVGFLETISPGYSIHTYLWRRQ.

The N-terminal stretch at Met-1 to Gly-39 is a signal peptide. 2 disulfide bridges follow: Cys-43–Cys-55 and Cys-57–Cys-62. N-linked (GlcNAc...) asparagine glycans are attached at residues Asn-58, Asn-98, and Asn-185. The active-site Proton donor is Glu-274. Residue Asn-309 is glycosylated (N-linked (GlcNAc...) asparagine). The active-site Nucleophile is the Glu-379. The N-linked (GlcNAc...) asparagine glycan is linked to Asn-501.

Belongs to the glycosyl hydrolase 30 family. Interacts with saposin-C. Interacts with SCARB2. Interacts with TCP1. Interacts with GRN; this interaction prevents aggregation of GBA1-SCARB2 complex via interaction with HSPA1A upon stress.

The protein localises to the lysosome membrane. It catalyses the reaction a beta-D-glucosyl-(1&lt;-&gt;1')-N-acylsphing-4-enine + H2O = an N-acylsphing-4-enine + D-glucose. It carries out the reaction a beta-D-galactosyl-(1&lt;-&gt;1')-N-acylsphing-4-enine + H2O = an N-acylsphing-4-enine + D-galactose. The catalysed reaction is cholesteryl 3-beta-D-glucoside + H2O = cholesterol + D-glucose. The enzyme catalyses a beta-D-glucosyl-(1&lt;-&gt;1')-N-acylsphing-4-enine + cholesterol = cholesteryl 3-beta-D-glucoside + an N-acylsphing-4-enine. It catalyses the reaction beta-D-glucosyl-N-(9Z-octadecenoyl)-sphing-4E-enine + cholesterol = N-(9Z-octadecenoyl)-sphing-4-enine + cholesteryl 3-beta-D-glucoside. It carries out the reaction beta-D-glucosyl-N-octanoylsphing-4E-enine + cholesterol = N-octanoylsphing-4-enine + cholesteryl 3-beta-D-glucoside. The catalysed reaction is beta-D-glucosyl-N-dodecanoylsphing-4-enine + cholesterol = N-dodecanoylsphing-4-enine + cholesteryl 3-beta-D-glucoside. The enzyme catalyses beta-D-glucosyl-(1&lt;-&gt;1)-N-octadecanoylsphing-4-enine + cholesterol = N-octadecanoylsphing-4-enine + cholesteryl 3-beta-D-glucoside. It catalyses the reaction beta-D-glucosyl-(1&lt;-&gt;1')-N-(15Z-tetracosenoyl)-sphing-4-enine + cholesterol = N-(15Z-tetracosenoyl)-sphing-4-enine + cholesteryl 3-beta-D-glucoside. It carries out the reaction a beta-D-galactosyl-(1&lt;-&gt;1')-N-acylsphing-4-enine + cholesterol = cholesteryl 3-beta-D-galactoside + an N-acylsphing-4-enine. The catalysed reaction is 1-(beta-D-galactosyl)-N-dodecanoylsphing-4-enine + cholesterol = cholesteryl 3-beta-D-galactoside + N-dodecanoylsphing-4-enine. The enzyme catalyses a beta-D-xylosyl-(1&lt;-&gt;1')-N-acylsphing-4-enine + cholesterol = cholesteryl 3-beta-D-xyloside + an N-acylsphing-4-enine. It catalyses the reaction beta-D-xylosyl-(1&lt;-&gt;1')-N-(9Z-octadecenoyl)-sphing-4-enine + cholesterol = cholesteryl 3-beta-D-xyloside + N-(9Z-octadecenoyl)-sphing-4-enine. The protein operates within steroid metabolism; cholesterol metabolism. It functions in the pathway sphingolipid metabolism. Functionally, glucosylceramidase that catalyzes, within the lysosomal compartment, the hydrolysis of glucosylceramides/GlcCers (such as beta-D-glucosyl-(1&lt;-&gt;1')-N-acylsphing-4-enine) into free ceramides (such as N-acylsphing-4-enine) and glucose. Plays a central role in the degradation of complex lipids and the turnover of cellular membranes. Through the production of ceramides, participates in the PKC-activated salvage pathway of ceramide formation. Catalyzes the glucosylation of cholesterol, through a transglucosylation reaction where glucose is transferred from GlcCer to cholesterol. GlcCer containing mono-unsaturated fatty acids (such as beta-D-glucosyl-N-(9Z-octadecenoyl)-sphing-4-enine) are preferred as glucose donors for cholesterol glucosylation when compared with GlcCer containing same chain length of saturated fatty acids (such as beta-D-glucosyl-N-octadecanoyl-sphing-4-enine). Under specific conditions, may alternatively catalyze the reverse reaction, transferring glucose from cholesteryl 3-beta-D-glucoside to ceramide. Can also hydrolyze cholesteryl 3-beta-D-glucoside producing glucose and cholesterol. Catalyzes the hydrolysis of galactosylceramides/GalCers (such as beta-D-galactosyl-(1&lt;-&gt;1')-N-acylsphing-4-enine), as well as the transfer of galactose between GalCers and cholesterol in vitro, but with lower activity than with GlcCers. Contrary to GlcCer and GalCer, xylosylceramide/XylCer (such as beta-D-xyosyl-(1&lt;-&gt;1')-N-acylsphing-4-enine) is not a good substrate for hydrolysis, however it is a good xylose donor for transxylosylation activity to form cholesteryl 3-beta-D-xyloside. This chain is Lysosomal acid glucosylceramidase (GBA1), found in Pan troglodytes (Chimpanzee).